Here is a 272-residue protein sequence, read N- to C-terminus: Isoprenyl transferase (272 aa).

Residue Asp32 is part of the active site. Residue Asp32 participates in Mg(2+) binding. Substrate contacts are provided by residues 33 to 36, Trp37, Arg45, His49, and 77 to 79; these read GNGR and STE. Asn80 serves as the catalytic Proton acceptor. Substrate contacts are provided by residues Trp81, Arg83, Arg200, and 206–208; that span reads RIS. Position 219 (Glu219) interacts with Mg(2+).

It belongs to the UPP synthase family. As to quaternary structure, homodimer. Mg(2+) is required as a cofactor.

Its function is as follows. Catalyzes the condensation of isopentenyl diphosphate (IPP) with allylic pyrophosphates generating different type of terpenoids. The protein is Isoprenyl transferase of Prochlorococcus marinus subsp. pastoris (strain CCMP1986 / NIES-2087 / MED4).